The chain runs to 893 residues: Dystroglycan 1 (893 aa).

The signal sequence occupies residues 1–27 (MSVDNWLLHPLWGQTFLLLLSVAVAQA). The interval 28–406 (HWPSEPSEAV…GQIRPTLTIP (379 aa)) is required for laminin recognition. The O-glycosylated at one site stretch occupies residues 47–69 (SMHSVLSDFQEAVPTVVGIPDGT). N139 is a glycosylation site (N-linked (GlcNAc...) asparagine). A disulfide bond links C180 and C262. The interval 314–483 (ATPTPVTAIG…PPTRIRTTTS (170 aa)) is mucin-like domain. T315, T317, and T377 each carry an O-linked (Man6P...) threonine glycan. The interval 379 to 498 (TLGPIQPTRV…GEPNQRPELK (120 aa)) is disordered. Over residues 409–445 (VEPTAVITPPTTTTKKPRVSTPKPATPSTDSSTTTTR) the composition is skewed to low complexity. The O-glycosylated at seven sites with GalNAc stretch occupies residues 461-483 (TTKAPITRLETASPPTRIRTTTS). A Peptidase S72 domain is found at 601-710 (KAPARFKARL…LSIAVTGSGS (110 aa)). N639, N647, and N659 each carry an N-linked (GlcNAc...) asparagine glycan. Topologically, residues 652–751 (SIVVEWTNNT…SSEDDVYLHT (100 aa)) are extracellular. The cysteines at positions 667 and 711 are disulfide-linked. Residues 722 to 744 (PSPGSSAAPATEVPDRDPEKSSE) are disordered. The span at 734-744 (VPDRDPEKSSE) shows a compositional bias: basic and acidic residues. Residues 752–772 (VIPAVVVAAILLIAGIIAMIC) form a helical membrane-spanning segment. Over 773–893 (YRKKRKGKLT…YRSPPPYVPP (121 aa)) the chain is Cytoplasmic. The Nuclear localization signal signature appears at 774 to 780 (RKKRKGK). A Phosphothreonine modification is found at T788. Positions 817-893 (LQEEKAPLPP…YRSPPPYVPP (77 aa)) are required for interaction with CAV3. Residues 821–893 (KAPLPPPEYP…YRSPPPYVPP (73 aa)) form a disordered region. Residues 830–844 (PNQSMPETTPLNQDT) show a composition bias toward polar residues. Pro residues predominate over residues 857 to 868 (NAPPYQPPPPFT). The tract at residues 878-893 (PKNMTPYRSPPPYVPP) is required for binding DMD and UTRN. Residues 887-890 (PPPY) carry the PPXY motif motif. Phosphotyrosine; by SRC is present on Y890.

In terms of assembly, monomer. Heterodimer of alpha- and beta-dystroglycan subunits which are the central components of the dystrophin-glycoprotein complex. This complex then can form a dystrophin-associated glycoprotein complex (DGC) which is composed of three subcomplexes: a cytoplasmic complex comprised of DMD (or UTRN), DTNA and a number of syntrophins, such as SNTB1, SNTB2, SNTG1 and SNTG2, the transmembrane dystroglycan complex, and the sarcoglycan-sarcospan complex. Interacts (via the N-terminal of alphaDAG1) with LARGE1; the interaction enhances laminin binding. Interacts with SGCD. Interacts with AGR2 and AGR3. Interacts (betaDAG1) with DMD; the interaction is inhibited by phosphorylation on the PPXY motif. Interacts (betaDAG1, via its PPXY motif) with UTRN (via its WWW and ZZ domains); the interaction is inhibited by phosphorylation on the PPXY motif. Interacts (betaDAG1, via its phosphorylated PPXY motif) with the SH2 domain-containing proteins, FYN, CSK, NCK and SHC. Interacts (betaDAG1) with CAV3 (via a central WW-like domain); the interaction disrupts the binding of DMD. BetaDAG1 directly interacts with ANK3, but not with ANK2; this interaction does not interfere with DMD-binding and is required for retention at costameres. Identified in a dystroglycan complex that contains at least PRX, DRP2, UTRN, DMD and DAG1. Interacts with POMGNT1. BetaDAG1 interacts with CD93. O-glycosylated. POMGNT1 catalyzes the initial addition of N-acetylglucosamine, giving rise to the GlcNAc(beta1-2)Man(alpha1-)O-Ser/Thr moiety and thus providing the necessary basis for the addition of further carbohydrate moieties. Heavily O-glycosylated comprising of up to two thirds of its mass and the carbohydrate composition differs depending on tissue type. Mucin-type O-glycosylation is important for ligand binding activity. O-mannosylation is found in high abundance in both brain and muscle where the most abundant glycan is Sia-alpha-2-3-Gal-beta-1-4-Glc-NAc-beta-1-2-Man. In muscle, glycosylation on Thr-315, Thr-317, Thr-379 by a phosphorylated O-mannosyl glycan with the structure 2-(N-acetylamido)-2-deoxygalactosyl-beta-1,3-2-(N-acetylamido)-2-deoxyglucosyl-beta-1,4-6-phosphomannose is mediated by like-acetylglucosaminyltransferase (LARGE1) protein amd is required for laminin binding. O-glycosylated in the N-terminal region with a core 1 or possibly core 8 glycan. The brain form displays a unique glycosylation pattern which is absent in other tissues; this form shows enhanced binding to laminin LAMA5 compared to the skeletal muscle form. In terms of processing, N-glycosylated. Post-translationally, autolytic cleavage produces the alpha and beta subunits. In cutaneous cells, as well as in certain pathological conditions, shedding of beta-dystroglycan can occur releasing a peptide of about 30 kDa. SRC-mediated phosphorylation of the PPXY motif of the beta subunit recruits SH2 domain-containing proteins, but inhibits binding to WWW domain-containing proteins, DMD and UTRN. This phosphorylation also inhibits nuclear entry. In terms of tissue distribution, detected in brain and kidney (at protein level). Detected in sciatic nerve (at protein level). Expressed in neurons and muscle cells (at protein level). Expressed in a variety of tissues. In brain, expressed in the hippocampal formation, the olfactory bulb, the cerebellum and the thalamus. In the peripheral nerve system, expressed in Schwann cells.

It localises to the secreted. The protein resides in the extracellular space. It is found in the cell membrane. Its subcellular location is the cytoplasm. The protein localises to the cytoskeleton. It localises to the nucleus. The protein resides in the nucleoplasm. It is found in the sarcolemma. Its subcellular location is the postsynaptic cell membrane. Functionally, the dystroglycan complex is involved in a number of processes including laminin and basement membrane assembly, sarcolemmal stability, cell survival, peripheral nerve myelination, nodal structure, cell migration, and epithelial polarization. In terms of biological role, extracellular peripheral glycoprotein that acts as a receptor for extracellular matrix proteins containing laminin-G domains, and for certain adenoviruses. Receptor for laminin-2 (LAMA2) and agrin in peripheral nerve Schwann cells. Also acts as a receptor for laminin LAMA5. Its function is as follows. Transmembrane protein that plays important roles in connecting the extracellular matrix to the cytoskeleton. Acts as a cell adhesion receptor in both muscle and non-muscle tissues. Receptor for both DMD and UTRN and, through these interactions, scaffolds axin to the cytoskeleton. Also functions in cell adhesion-mediated signaling and implicated in cell polarity. This chain is Dystroglycan 1, found in Mus musculus (Mouse).